We begin with the raw amino-acid sequence, 651 residues long: Cylicin-1 (651 aa).

Disordered stretches follow at residues 110–241 (LKKA…CSEN) and 267–615 (NYSQ…CEPS). 2 stretches are compositionally biased toward basic and acidic residues: residues 111–129 (KKAE…PLKK) and 146–173 (QIVE…EQSK). The segment covering 186–195 (QNSKTVSKNC) has biased composition (polar residues). Positions 196 to 205 (SQKDKKDSKN) are enriched in basic and acidic residues. The span at 230-241 (SNDPISEICSEN) shows a compositional bias: polar residues. The span at 271-281 (NNSKNYSLKYT) shows a compositional bias: low complexity. A run of 8 repeats spans residues 278-305 (LKYT…DSKD), 306-342 (AKKD…DSKD), 343-379 (ERKD…DAKD), 380-417 (ARND…ESKE), 418-453 (SQKD…PKGD), 454-491 (SKKG…SDLE), 492-531 (LKKD…SKTG), and 532-553 (FKTS…YKPG). Basic and acidic residues-rich tracts occupy residues 284 to 308 (TKKD…DAKK), 318 to 331 (KKDD…KDTE), 338 to 368 (GDSK…KYPE), 375 to 402 (GDAK…DAKK), 413 to 441 (LESK…KNDE), and 448 to 482 (SEPK…KNAE). A compositionally biased stretch (basic residues) spans 495-505 (DKKHSKEKKGS). Over residues 506-518 (KKDIKKDARKDTE) the composition is skewed to basic and acidic residues. Residues 529–538 (KTGFKTSTKI) are compositionally biased toward polar residues. The segment at 532 to 553 (FKTSTKIKGSDTESEESLYKPG) is 8 X approximate tandem repeats. Residues 587–607 (TFNEKGEKASTGRVPPSREKP) show a composition bias toward basic and acidic residues.

As to quaternary structure, interacts with proteins of spermatozoa head including ACTL7A, CCIN, FAM209A and SPACA1; the interactions may be necessary for proper acrosome attachment to the nuclear envelope. In terms of tissue distribution, testis.

The protein localises to the cytoplasm. Its subcellular location is the cytoskeleton. It is found in the perinuclear theca. The protein resides in the calyx. In terms of biological role, plays a role in the establishment of normal sperm morphology during spermatogenesis and is required for acrosome attachment to the nuclear envelope. This Homo sapiens (Human) protein is Cylicin-1 (CYLC1).